A 150-amino-acid chain; its full sequence is uncharacterized protein (150 aa).

This is an uncharacterized protein from Acidianus bottle-shaped virus (isolate Italy/Pozzuoli) (ABV).